The primary structure comprises 170 residues: ATP synthase subunit b (170 aa).

A helical transmembrane segment spans residues 30-50 (FFFVLAIFLVVLAVIGTFVVP).

Belongs to the ATPase B chain family. In terms of assembly, F-type ATPases have 2 components, F(1) - the catalytic core - and F(0) - the membrane proton channel. F(1) has five subunits: alpha(3), beta(3), gamma(1), delta(1), epsilon(1). F(0) has three main subunits: a(1), b(2) and c(10-14). The alpha and beta chains form an alternating ring which encloses part of the gamma chain. F(1) is attached to F(0) by a central stalk formed by the gamma and epsilon chains, while a peripheral stalk is formed by the delta and b chains.

The protein localises to the cell membrane. In terms of biological role, f(1)F(0) ATP synthase produces ATP from ADP in the presence of a proton or sodium gradient. F-type ATPases consist of two structural domains, F(1) containing the extramembraneous catalytic core and F(0) containing the membrane proton channel, linked together by a central stalk and a peripheral stalk. During catalysis, ATP synthesis in the catalytic domain of F(1) is coupled via a rotary mechanism of the central stalk subunits to proton translocation. Component of the F(0) channel, it forms part of the peripheral stalk, linking F(1) to F(0). The protein is ATP synthase subunit b of Mycobacterium ulcerans (strain Agy99).